Here is a 515-residue protein sequence, read N- to C-terminus: SWI/SNF-related matrix-associated actin-dependent regulator of chromatin subfamily D member 1 (515 aa).

Residues 1 to 103 (MAARAGFQSV…SGMDQSRKRP (103 aa)) are disordered. Gly residues predominate over residues 14 to 23 (GGAGASGGAG). The tract at residues 43–167 (APGQGLYRSP…DQTIMRKRLD (125 aa)) is interaction with ESR1, NR1H4, NR3C1, PGR and SMARCA4. Arginine 68 and arginine 88 each carry asymmetric dimethylarginine. Lysine 101 participates in a covalent cross-link: Glycyl lysine isopeptide (Lys-Gly) (interchain with G-Cter in SUMO2). The interval 168 to 474 (IQEALKRPIK…TMTDVVGNPE (307 aa)) is interaction with SMARCC1 and SMARCC2. A necessary for GR/NR3C1-mediated remodeling and transcription from chromatin; required for GR/NR3C1 interaction with the BRG1/SMARCA4 complex in vivo region spans residues 180 to 515 (RKLRIFISNT…LEQALGIRNT (336 aa)). Threonine 203 bears the Phosphothreonine mark. Residue lysine 223 is modified to N6-acetyllysine. An SWIB/MDM2 domain is found at 290-367 (YQPPQFKLDP…PQRLHALLMP (78 aa)). Residues 412–440 (ASQQEIATLDNKIHETIETINQLKTQREF) are a coiled coil.

This sequence belongs to the SMARCD family. In terms of assembly, component of the multiprotein chromatin-remodeling complexes SWI/SNF: SWI/SNF-A (BAF), SWI/SNF-B (PBAF) and related complexes. The canonical complex contains a catalytic subunit (either SMARCA4/BRG1/BAF190A or SMARCA2/BRM/BAF190B), and at least SMARCE1, ACTL6A/BAF53, SMARCC1/BAF155, SMARCC2/BAF170, and SMARCB1/SNF5/BAF47. Other subunits specific to each of the complexes may also be present permitting several possible combinations developmentally and tissue specific. Component of the BAF complex, which includes at least actin (ACTB), ARID1A/BAF250A, ARID1B/BAF250B, SMARCA2/BRM, SMARCA4/BRG1/BAF190A, ACTL6A/BAF53, ACTL6B/BAF53B, SMARCE1/BAF57, SMARCC1/BAF155, SMARCC2/BAF170, SMARCB1/SNF5/INI1, and one or more SMARCD1/BAF60A, SMARCD2/BAF60B, or SMARCD3/BAF60C. In muscle cells, the BAF complex also contains DPF3. Component of neural progenitors-specific chromatin remodeling complex (npBAF complex) composed of at least, ARID1A/BAF250A or ARID1B/BAF250B, SMARCD1/BAF60A, SMARCD3/BAF60C, SMARCA2/BRM/BAF190B, SMARCA4/BRG1/BAF190A, SMARCB1/BAF47, SMARCC1/BAF155, SMARCE1/BAF57, SMARCC2/BAF170, PHF10/BAF45A, ACTL6A/BAF53A and actin. Component of neuron-specific chromatin remodeling complex (nBAF complex) composed of at least, ARID1A/BAF250A or ARID1B/BAF250B, SMARCD1/BAF60A, SMARCD3/BAF60C, SMARCA2/BRM/BAF190B, SMARCA4/BRG1/BAF190A, SMARCB1/BAF47, SMARCC1/BAF155, SMARCE1/BAF57, SMARCC2/BAF170, DPF1/BAF45B, DPF3/BAF45C, ACTL6B/BAF53B and actin. Component of the SWI/SNF-B (PBAF) chromatin remodeling complex, at least composed of SMARCA4/BRG1, SMARCB1/BAF47/SNF5, ACTL6A/BAF53A or ACTL6B/BAF53B, SMARCE1/BAF57, SMARCD1/BAF60A, SMARCD2/BAF60B, perhaps SMARCD3/BAF60C, SMARCC1/BAF155, SMARCC2/BAF170, PBRM1/BAF180, ARID2/BAF200 and actin (ACTB). Component of SWI/SNF (GBAF) subcomplex, which includes at least BICRA or BICRAL (mutually exclusive), BRD9, SS18, SMARCA2/BRM, SMARCA4/BRG1/BAF190A, ACTL6A/BAF53, SMARCC1/BAF155, and SMARCD1/BAF60A. Specifically interacts with the VDR heterodimer complex. Interacts with ESR1, NR3C1, NR1H4, PGR, SMARCA4, SMARCC1 and SMARCC2. Interacts with DPF2. Interacts with DPF3a (isoform 2 of DPF3/BAF45C) and with HDGFL2 in a DPF3a-dependent manner. Interacts with FOS, FOSB isoform 1 and 2, FOSL1 and FOSL2. Expressed in all tissues tested, including brain, heart, kidney, liver, lung, muscle, pancreas and placenta.

It is found in the nucleus. Its function is as follows. Involved in transcriptional activation and repression of select genes by chromatin remodeling (alteration of DNA-nucleosome topology). Component of SWI/SNF chromatin remodeling complexes that carry out key enzymatic activities, changing chromatin structure by altering DNA-histone contacts within a nucleosome in an ATP-dependent manner. Belongs to the neural progenitors-specific chromatin remodeling complex (npBAF complex) and the neuron-specific chromatin remodeling complex (nBAF complex). During neural development a switch from a stem/progenitor to a postmitotic chromatin remodeling mechanism occurs as neurons exit the cell cycle and become committed to their adult state. The transition from proliferating neural stem/progenitor cells to postmitotic neurons requires a switch in subunit composition of the npBAF and nBAF complexes. As neural progenitors exit mitosis and differentiate into neurons, npBAF complexes which contain ACTL6A/BAF53A and PHF10/BAF45A, are exchanged for homologous alternative ACTL6B/BAF53B and DPF1/BAF45B or DPF3/BAF45C subunits in neuron-specific complexes (nBAF). The npBAF complex is essential for the self-renewal/proliferative capacity of the multipotent neural stem cells. The nBAF complex along with CREST plays a role regulating the activity of genes essential for dendrite growth. Has a strong influence on vitamin D-mediated transcriptional activity from an enhancer vitamin D receptor element (VDRE). May be a link between mammalian SWI-SNF-like chromatin remodeling complexes and the vitamin D receptor (VDR) heterodimer. Mediates critical interactions between nuclear receptors and the BRG1/SMARCA4 chromatin-remodeling complex for transactivation. Interacts with AKIRIN2. The sequence is that of SWI/SNF-related matrix-associated actin-dependent regulator of chromatin subfamily D member 1 from Homo sapiens (Human).